A 99-amino-acid chain; its full sequence is Aspartyl/glutamyl-tRNA(Asn/Gln) amidotransferase subunit C (99 aa).

This sequence belongs to the GatC family. In terms of assembly, heterotrimer of A, B and C subunits.

The catalysed reaction is L-glutamyl-tRNA(Gln) + L-glutamine + ATP + H2O = L-glutaminyl-tRNA(Gln) + L-glutamate + ADP + phosphate + H(+). It catalyses the reaction L-aspartyl-tRNA(Asn) + L-glutamine + ATP + H2O = L-asparaginyl-tRNA(Asn) + L-glutamate + ADP + phosphate + 2 H(+). Functionally, allows the formation of correctly charged Asn-tRNA(Asn) or Gln-tRNA(Gln) through the transamidation of misacylated Asp-tRNA(Asn) or Glu-tRNA(Gln) in organisms which lack either or both of asparaginyl-tRNA or glutaminyl-tRNA synthetases. The reaction takes place in the presence of glutamine and ATP through an activated phospho-Asp-tRNA(Asn) or phospho-Glu-tRNA(Gln). In Cupriavidus metallidurans (strain ATCC 43123 / DSM 2839 / NBRC 102507 / CH34) (Ralstonia metallidurans), this protein is Aspartyl/glutamyl-tRNA(Asn/Gln) amidotransferase subunit C.